A 434-amino-acid polypeptide reads, in one-letter code: Zinc carboxypeptidase (434 aa).

A signal peptide spans 1–33 (MSPKRRRLMAAALGACVALVLPLHAGSAQPSTA). Positions 34 to 114 (KTPERTVFEV…DFTDPQVGTQ (81 aa)) are cleaved as a propeptide — activation peptide. The region spanning 122-423 (GYHNFQETVT…SAVELFLSYS (302 aa)) is the Peptidase M14 domain. Zn(2+)-binding residues include His-183 and Glu-186. The segment at 270–295 (GSSSSGSSETTAARRRSPPRRSPHPH) is disordered. Residues 282–293 (ARRRSPPRRSPH) show a composition bias toward basic residues. Residue His-315 participates in Zn(2+) binding. Residue Glu-388 is the Proton donor/acceptor of the active site.

Belongs to the peptidase M14 family. Zn(2+) serves as cofactor.

It carries out the reaction Releases a C-terminal residue, which may be hydrophobic or positively charged.. Its function is as follows. Carboxypeptidase that possesses the specificities of both mammalian Cpase A and B. Thus shows broad substrate specificity, being able to cleave Cbz-Gly-Leu, Cbz-Gly-Val, Cbz-Gly-Phe, Cbz-Gly-Lys and Bz-Gly-Arg in vitro. This is Zinc carboxypeptidase from Saccharothrix mutabilis subsp. capreolus (Streptomyces capreolus).